Reading from the N-terminus, the 69-residue chain is Large ribosomal subunit protein bL31 (69 aa).

Cys-17, Cys-19, Cys-37, and Cys-40 together coordinate Zn(2+).

This sequence belongs to the bacterial ribosomal protein bL31 family. Type A subfamily. In terms of assembly, part of the 50S ribosomal subunit. The cofactor is Zn(2+).

In terms of biological role, binds the 23S rRNA. This Clostridium botulinum (strain Eklund 17B / Type B) protein is Large ribosomal subunit protein bL31.